A 148-amino-acid polypeptide reads, in one-letter code: Nucleoside diphosphate kinase 1 (148 aa).

ATP is bound by residues K9, F57, R85, T91, R102, and N112. H115 acts as the Pros-phosphohistidine intermediate in catalysis.

It belongs to the NDK family. The cofactor is Mg(2+).

It catalyses the reaction a 2'-deoxyribonucleoside 5'-diphosphate + ATP = a 2'-deoxyribonucleoside 5'-triphosphate + ADP. The enzyme catalyses a ribonucleoside 5'-diphosphate + ATP = a ribonucleoside 5'-triphosphate + ADP. Functionally, major role in the synthesis of nucleoside triphosphates other than ATP. The ATP gamma phosphate is transferred to the NDP beta phosphate via a ping-pong mechanism, using a phosphorylated active-site intermediate. The chain is Nucleoside diphosphate kinase 1 (NDKP1) from Mesembryanthemum crystallinum (Common ice plant).